We begin with the raw amino-acid sequence, 261 residues long: Glucosamine-6-phosphate deaminase (261 aa).

Asp-67 (proton acceptor; for enolization step) is an active-site residue. The For ring-opening step role is filled by Asn-136. The active-site Proton acceptor; for ring-opening step is His-138. The active-site For ring-opening step is the Glu-143.

The protein belongs to the glucosamine/galactosamine-6-phosphate isomerase family. NagB subfamily.

It carries out the reaction alpha-D-glucosamine 6-phosphate + H2O = beta-D-fructose 6-phosphate + NH4(+). It participates in amino-sugar metabolism; N-acetylneuraminate degradation; D-fructose 6-phosphate from N-acetylneuraminate: step 5/5. Its function is as follows. Catalyzes the reversible isomerization-deamination of glucosamine 6-phosphate (GlcN6P) to form fructose 6-phosphate (Fru6P) and ammonium ion. This is Glucosamine-6-phosphate deaminase from Cutibacterium acnes (strain DSM 16379 / KPA171202) (Propionibacterium acnes).